We begin with the raw amino-acid sequence, 497 residues long: Nuclear pore complex protein npp-16 (497 aa).

Disordered regions lie at residues 76-95 (VPRR…APRK), 210-308 (TKKS…SAPK), and 359-379 (MENQ…GEYV). Composition is skewed to basic and acidic residues over residues 231-240 (KDGDKPKETP) and 250-260 (KPAEPSEEPKA). The segment at 390–497 (EPDAVLSSKV…FTDKILEVAV (108 aa)) is ranBD1.

In terms of assembly, interacts with importin beta imb-1. Interacts with DNA-directed RNA polymerase III subunit rpc-1. Interacts with TATA-box-binding protein tbp-1. Interacts with GTF3C5 homolog tftc-5. Interacts with GTF3C3 homolog tftc-3.

Its subcellular location is the nucleus. The protein localises to the nuclear pore complex. It is found in the nucleus membrane. In terms of biological role, component of the nuclear pore complex. Plays a direct role in nuclear protein import. Required for anoxia-induced prophase arrest; may function in concert with cdk-1 to arrest prophase blastomeres in response to anoxia. This is Nuclear pore complex protein npp-16 from Caenorhabditis elegans.